Here is a 474-residue protein sequence, read N- to C-terminus: Cysteine--tRNA ligase (474 aa).

Cys-34 serves as a coordination point for Zn(2+). The short motif at 36–46 is the 'HIGH' region element; the sequence is PTVYDYAHIGN. 3 residues coordinate Zn(2+): Cys-219, His-244, and Glu-248. Positions 276–280 match the 'KMSKS' region motif; it reads KMSKS. Lys-279 contributes to the ATP binding site.

It belongs to the class-I aminoacyl-tRNA synthetase family. In terms of assembly, monomer. Zn(2+) is required as a cofactor.

It is found in the cytoplasm. It carries out the reaction tRNA(Cys) + L-cysteine + ATP = L-cysteinyl-tRNA(Cys) + AMP + diphosphate. This Chlamydia pneumoniae (Chlamydophila pneumoniae) protein is Cysteine--tRNA ligase (cysS).